Consider the following 89-residue polypeptide: Dynein light chain 2, cytoplasmic (89 aa).

Belongs to the dynein light chain family.

Its subcellular location is the cytoplasm. The protein resides in the cytoskeleton. Acts as a non-catalytic accessory component of a dynein complex. The protein is Dynein light chain 2, cytoplasmic (Cdlc2) of Drosophila melanogaster (Fruit fly).